Consider the following 101-residue polypeptide: NADH-quinone oxidoreductase subunit K (101 aa).

Helical transmembrane passes span 4 to 24 (LAHY…GIFL), 29 to 49 (IIII…NFVA), and 61 to 81 (IFVF…LAIL).

It belongs to the complex I subunit 4L family. As to quaternary structure, NDH-1 is composed of 14 different subunits. Subunits NuoA, H, J, K, L, M, N constitute the membrane sector of the complex.

The protein resides in the cell inner membrane. It catalyses the reaction a quinone + NADH + 5 H(+)(in) = a quinol + NAD(+) + 4 H(+)(out). In terms of biological role, NDH-1 shuttles electrons from NADH, via FMN and iron-sulfur (Fe-S) centers, to quinones in the respiratory chain. The immediate electron acceptor for the enzyme in this species is believed to be ubiquinone. Couples the redox reaction to proton translocation (for every two electrons transferred, four hydrogen ions are translocated across the cytoplasmic membrane), and thus conserves the redox energy in a proton gradient. The polypeptide is NADH-quinone oxidoreductase subunit K (Burkholderia ambifaria (strain MC40-6)).